A 175-amino-acid polypeptide reads, in one-letter code: Alpha-crystallin B chain (175 aa).

Met1 is modified (N-acetylmethionine). Ser19 carries the phosphoserine modification. Ser41 carries an O-linked (GlcNAc) serine glycan. Residues Ser45 and Ser59 each carry the phosphoserine modification. The sHSP domain occupies 56–164 (RAPSWIDTGL…PERTIPITRE (109 aa)). A Zn(2+)-binding site is contributed by His83. Lys92 carries the N6-acetyllysine modification. 4 residues coordinate Zn(2+): His104, Glu106, His111, and His119. Positions 142–175 (VLTVNGPRKQASGPERTIPITREEKPAVTAAPKK) are disordered. The residue at position 166 (Lys166) is an N6-acetyllysine. O-linked (GlcNAc) threonine glycosylation is present at Thr170.

The protein belongs to the small heat shock protein (HSP20) family. Heteromer composed of three CRYAA and one CRYAB subunits. Aggregates with homologous proteins, including the small heat shock protein HSPB1, to form large heteromeric complexes. Inter-subunit bridging via zinc ions enhances stability, which is crucial as there is no protein turn over in the lens. Interacts with HSPBAP1 and TTN/titin. Interacts with TMEM109; in the cellular response to DNA damage. Interacts with DES; binds rapidly during early stages of DES filament assembly and a reduced binding seen in the later stages. Interacts with ATP6V1A and with MTOR, forming a ternary complex. In terms of tissue distribution, lens as well as other tissues.

The protein resides in the cytoplasm. Its subcellular location is the nucleus. The protein localises to the secreted. It is found in the lysosome. Its function is as follows. May contribute to the transparency and refractive index of the lens. Has chaperone-like activity, preventing aggregation of various proteins under a wide range of stress conditions. In lens epithelial cells, stabilizes the ATP6V1A protein, preventing its degradation by the proteasome. The sequence is that of Alpha-crystallin B chain (CRYAB) from Spalax judaei (Judean Mountains blind mole rat).